The chain runs to 595 residues: Probable translation initiation factor IF-2 (595 aa).

Positions 11 to 225 (LRTPIVAVLG…ILVGLAQRYL (215 aa)) constitute a tr-type G domain. A G1 region spans residues 20–27 (GHVDHGKT). 20–27 (GHVDHGKT) lines the GTP pocket. The tract at residues 45-49 (GITQH) is G2. The interval 81–84 (DTPG) is G3. Residues 81–85 (DTPGH) and 135–138 (NKID) each bind GTP. The G4 stretch occupies residues 135–138 (NKID). Residues 203-205 (SAL) are G5.

Belongs to the TRAFAC class translation factor GTPase superfamily. Classic translation factor GTPase family. IF-2 subfamily.

In terms of biological role, function in general translation initiation by promoting the binding of the formylmethionine-tRNA to ribosomes. Seems to function along with eIF-2. This is Probable translation initiation factor IF-2 (infB) from Archaeoglobus fulgidus (strain ATCC 49558 / DSM 4304 / JCM 9628 / NBRC 100126 / VC-16).